The following is a 352-amino-acid chain: tRNA N6-adenosine threonylcarbamoyltransferase (352 aa).

Fe cation-binding residues include His-109 and His-113. Residues 136 to 140 (TVSGG), Asp-169, Gly-182, Asp-186, and Asn-284 each bind substrate. Residue Asp-312 participates in Fe cation binding.

It belongs to the KAE1 / TsaD family. The cofactor is Fe(2+).

It localises to the cytoplasm. It catalyses the reaction L-threonylcarbamoyladenylate + adenosine(37) in tRNA = N(6)-L-threonylcarbamoyladenosine(37) in tRNA + AMP + H(+). Functionally, required for the formation of a threonylcarbamoyl group on adenosine at position 37 (t(6)A37) in tRNAs that read codons beginning with adenine. Is involved in the transfer of the threonylcarbamoyl moiety of threonylcarbamoyl-AMP (TC-AMP) to the N6 group of A37, together with TsaE and TsaB. TsaD likely plays a direct catalytic role in this reaction. This chain is tRNA N6-adenosine threonylcarbamoyltransferase, found in Chloroherpeton thalassium (strain ATCC 35110 / GB-78).